A 1273-amino-acid polypeptide reads, in one-letter code: Inverted formin-2 (1273 aa).

5 disordered regions span residues 1–30 (MSVK…EANL), 346–387 (GRPR…GQQP), 427–559 (LSSS…PLPG), 960–999 (NKDR…GPGK), and 1021–1273 (KTAR…CVIQ). Position 2 is an N-acetylserine (Ser2). A GBD/FH3 domain is found at 2-330 (SVKEGAQRKW…RAVLLASDAQ (329 aa)). Ser351 bears the Phosphoserine mark. A compositionally biased stretch (low complexity) spans 359-382 (SVQTNSVQNQGSSSQNTTTPTTKV). Residues 421 to 564 (PLPTPPLSSS…PPLPGFSVPS (144 aa)) enclose the FH1 domain. 2 stretches are compositionally biased toward pro residues: residues 433–516 (VLPP…PLPS) and 524–558 (QPPP…PPLP). The FH2 domain occupies 589–979 (HRRVNPPTLR…AERRKQQLAE (391 aa)). Residues 907–984 (EASQELDKVF…QQLAEEEARR (78 aa)) are a coiled coil. In terms of domain architecture, WH2 spans 1007–1022 (DALLADIRKGFQLRKT). The segment covering 1047-1059 (ATASNPTQGTNHP) has biased composition (polar residues). Positions 1088 to 1101 (SKEEDGPPALERRS) are enriched in basic and acidic residues. Ser1172 and Ser1174 each carry phosphoserine. Residues 1195–1204 (GEDEDGEDTA) are compositionally biased toward acidic residues. A Phosphothreonine modification is found at Thr1203. Ser1216 and Ser1218 each carry phosphoserine. Phosphothreonine occurs at positions 1223 and 1230. Residues 1242 to 1251 (TSKRRKKRPS) show a composition bias toward basic residues.

The protein belongs to the formin homology family. In terms of assembly, interacts with profilin and actin at the FH1 and FH2 domains respectively. Interacts with DAAM2.

It is found in the cytoplasm. It localises to the perinuclear region. Phosphate inhibits both the depolymerization and severing activities. In terms of biological role, severs actin filaments and accelerates their polymerization and depolymerization. This is Inverted formin-2 (Inf2) from Mus musculus (Mouse).